Reading from the N-terminus, the 284-residue chain is Lipoyl synthase (284 aa).

[4Fe-4S] cluster is bound by residues Cys34, Cys39, Cys45, Cys60, Cys64, Cys67, and Ser272. Positions 46–261 (FARRTATFMI…EEIGYKLGFK (216 aa)) constitute a Radical SAM core domain.

Belongs to the radical SAM superfamily. Lipoyl synthase family. It depends on [4Fe-4S] cluster as a cofactor.

It localises to the cytoplasm. It carries out the reaction [[Fe-S] cluster scaffold protein carrying a second [4Fe-4S](2+) cluster] + N(6)-octanoyl-L-lysyl-[protein] + 2 oxidized [2Fe-2S]-[ferredoxin] + 2 S-adenosyl-L-methionine + 4 H(+) = [[Fe-S] cluster scaffold protein] + N(6)-[(R)-dihydrolipoyl]-L-lysyl-[protein] + 4 Fe(3+) + 2 hydrogen sulfide + 2 5'-deoxyadenosine + 2 L-methionine + 2 reduced [2Fe-2S]-[ferredoxin]. Its pathway is protein modification; protein lipoylation via endogenous pathway; protein N(6)-(lipoyl)lysine from octanoyl-[acyl-carrier-protein]: step 2/2. In terms of biological role, catalyzes the radical-mediated insertion of two sulfur atoms into the C-6 and C-8 positions of the octanoyl moiety bound to the lipoyl domains of lipoate-dependent enzymes, thereby converting the octanoylated domains into lipoylated derivatives. This Caldanaerobacter subterraneus subsp. tengcongensis (strain DSM 15242 / JCM 11007 / NBRC 100824 / MB4) (Thermoanaerobacter tengcongensis) protein is Lipoyl synthase.